A 389-amino-acid chain; its full sequence is Phosphopentomutase (389 aa).

Positions 12, 284, 289, 325, 326, and 337 each coordinate Mn(2+).

Belongs to the phosphopentomutase family. Mn(2+) serves as cofactor.

It is found in the cytoplasm. It carries out the reaction 2-deoxy-alpha-D-ribose 1-phosphate = 2-deoxy-D-ribose 5-phosphate. The catalysed reaction is alpha-D-ribose 1-phosphate = D-ribose 5-phosphate. It participates in carbohydrate degradation; 2-deoxy-D-ribose 1-phosphate degradation; D-glyceraldehyde 3-phosphate and acetaldehyde from 2-deoxy-alpha-D-ribose 1-phosphate: step 1/2. Its function is as follows. Isomerase that catalyzes the conversion of deoxy-ribose 1-phosphate (dRib-1-P) and ribose 1-phosphate (Rib-1-P) to deoxy-ribose 5-phosphate (dRib-5-P) and ribose 5-phosphate (Rib-5-P), respectively. The sequence is that of Phosphopentomutase from Anaeromyxobacter sp. (strain Fw109-5).